Here is a 432-residue protein sequence, read N- to C-terminus: Asparagine--tRNA ligase (432 aa).

It belongs to the class-II aminoacyl-tRNA synthetase family. In terms of assembly, homodimer.

The protein resides in the cytoplasm. The enzyme catalyses tRNA(Asn) + L-asparagine + ATP = L-asparaginyl-tRNA(Asn) + AMP + diphosphate + H(+). This is Asparagine--tRNA ligase from Lactobacillus delbrueckii subsp. bulgaricus (strain ATCC 11842 / DSM 20081 / BCRC 10696 / JCM 1002 / NBRC 13953 / NCIMB 11778 / NCTC 12712 / WDCM 00102 / Lb 14).